Reading from the N-terminus, the 405-residue chain is Phosphoglycerate kinase (405 aa).

Substrate contacts are provided by residues 21 to 23 (DFN), Arg36, 59 to 62 (HLGR), Arg119, and Arg161. Residues Lys212, Gly301, Glu332, and 361 to 364 (GGDS) each bind ATP.

The protein belongs to the phosphoglycerate kinase family. As to quaternary structure, monomer.

Its subcellular location is the cytoplasm. It catalyses the reaction (2R)-3-phosphoglycerate + ATP = (2R)-3-phospho-glyceroyl phosphate + ADP. Its pathway is carbohydrate degradation; glycolysis; pyruvate from D-glyceraldehyde 3-phosphate: step 2/5. The sequence is that of Phosphoglycerate kinase from Leuconostoc citreum (strain KM20).